The following is a 324-amino-acid chain: MNTNINVNGSNYHPYIRDYNNENNNNNNGRNNNTNNNNNGRYNNNNNNNNNNNNNNYNLNMNSTGGSGGSGSSYSYSRSVNRNGVNYNMNYNNNNGYNNNNFNNNYNGQNYNGNFNYNNNNNNLNYNYNNNNNHYIGSGTNNNNNNNNNNNNNNNNNNNNNNNFNYNYNRNFNNNNNRGYGNNRNININNNNNNRLLQNQNQNQQKYYFKSSFLEDPWKKTQHPLPDNCIVPHDGNSNVTVTVTPNSYSYSSSSSSIQPFNDENEITIDSDDENIDRTSNNNNNNNNNNNNSYNVNICRNNSNFNVNENNGGDNNNDNNNDNDS.

A compositionally biased stretch (polar residues) spans 1 to 11; sequence MNTNINVNGSN. 3 disordered regions span residues 1 to 77, 132 to 194, and 272 to 324; these read MNTN…YSYS, NNHY…NNNN, and DENI…DNDS. Positions 21-64 are enriched in low complexity; that stretch reads NENNNNNNGRNNNTNNNNNGRYNNNNNNNNNNNNNNYNLNMNST. The segment covering 279-324 has biased composition (low complexity); the sequence is SNNNNNNNNNNNNSYNVNICRNNSNFNVNENNGGDNNNDNNNDNDS.

This is an uncharacterized protein from Dictyostelium discoideum (Social amoeba).